The primary structure comprises 244 residues: tRNA (guanine-N(7)-)-methyltransferase (244 aa).

The S-adenosyl-L-methionine site is built by glutamate 75, glutamate 100, aspartate 127, and aspartate 150. Aspartate 150 is an active-site residue. Residues lysine 154, aspartate 186, and 223-226 (TRFE) each bind substrate.

Belongs to the class I-like SAM-binding methyltransferase superfamily. TrmB family.

The catalysed reaction is guanosine(46) in tRNA + S-adenosyl-L-methionine = N(7)-methylguanosine(46) in tRNA + S-adenosyl-L-homocysteine. Its pathway is tRNA modification; N(7)-methylguanine-tRNA biosynthesis. Functionally, catalyzes the formation of N(7)-methylguanine at position 46 (m7G46) in tRNA. In Xylella fastidiosa (strain M23), this protein is tRNA (guanine-N(7)-)-methyltransferase.